Consider the following 880-residue polypeptide: Translation initiation factor IF-2 (880 aa).

2 stretches are compositionally biased toward basic and acidic residues: residues 180–194 (QEAATKRKQDEEAAK) and 202–228 (LAEEHSKRWAEEERQRLEAEKNGDHHI). A disordered region spans residues 180-289 (QEAATKRKQD…APESMAHGFN (110 aa)). Over residues 249 to 262 (GRRARNKSNAKKRG) the composition is skewed to basic residues. A tr-type G domain is found at 380-549 (SRAPVVTIMG…LLQAEVLELK (170 aa)). The segment at 389 to 396 (GHVDHGKT) is G1. 389 to 396 (GHVDHGKT) serves as a coordination point for GTP. Residues 414–418 (GITQH) are G2. A G3 region spans residues 435 to 438 (DTPG). Residues 435–439 (DTPGH) and 489–492 (NKMD) each bind GTP. The tract at residues 489 to 492 (NKMD) is G4. The G5 stretch occupies residues 525 to 527 (SAK).

This sequence belongs to the TRAFAC class translation factor GTPase superfamily. Classic translation factor GTPase family. IF-2 subfamily.

It localises to the cytoplasm. Its function is as follows. One of the essential components for the initiation of protein synthesis. Protects formylmethionyl-tRNA from spontaneous hydrolysis and promotes its binding to the 30S ribosomal subunits. Also involved in the hydrolysis of GTP during the formation of the 70S ribosomal complex. The protein is Translation initiation factor IF-2 of Shewanella baltica (strain OS223).